Reading from the N-terminus, the 354-residue chain is S-adenosylmethionine:tRNA ribosyltransferase-isomerase (354 aa).

It belongs to the QueA family. In terms of assembly, monomer.

Its subcellular location is the cytoplasm. The catalysed reaction is 7-aminomethyl-7-carbaguanosine(34) in tRNA + S-adenosyl-L-methionine = epoxyqueuosine(34) in tRNA + adenine + L-methionine + 2 H(+). It functions in the pathway tRNA modification; tRNA-queuosine biosynthesis. Functionally, transfers and isomerizes the ribose moiety from AdoMet to the 7-aminomethyl group of 7-deazaguanine (preQ1-tRNA) to give epoxyqueuosine (oQ-tRNA). This is S-adenosylmethionine:tRNA ribosyltransferase-isomerase from Pseudomonas syringae pv. tomato (strain ATCC BAA-871 / DC3000).